A 262-amino-acid polypeptide reads, in one-letter code: Acyl-[acyl-carrier-protein]--UDP-N-acetylglucosamine O-acyltransferase (262 aa).

Belongs to the transferase hexapeptide repeat family. LpxA subfamily. In terms of assembly, homotrimer.

The protein resides in the cytoplasm. It carries out the reaction a (3R)-hydroxyacyl-[ACP] + UDP-N-acetyl-alpha-D-glucosamine = a UDP-3-O-[(3R)-3-hydroxyacyl]-N-acetyl-alpha-D-glucosamine + holo-[ACP]. It functions in the pathway glycolipid biosynthesis; lipid IV(A) biosynthesis; lipid IV(A) from (3R)-3-hydroxytetradecanoyl-[acyl-carrier-protein] and UDP-N-acetyl-alpha-D-glucosamine: step 1/6. Its function is as follows. Involved in the biosynthesis of lipid A, a phosphorylated glycolipid that anchors the lipopolysaccharide to the outer membrane of the cell. This is Acyl-[acyl-carrier-protein]--UDP-N-acetylglucosamine O-acyltransferase from Haemophilus influenzae (strain ATCC 51907 / DSM 11121 / KW20 / Rd).